We begin with the raw amino-acid sequence, 226 residues long: UPF0758 protein PsycPRwf_0491 (226 aa).

Residues 102–224 form the MPN domain; sequence SLNRSQVVKD…TLSFAETATA (123 aa). Zn(2+) is bound by residues H173, H175, and D186. Residues 173-186 carry the JAMM motif motif; that stretch reads HNHPNQDATPSAAD.

Belongs to the UPF0758 family.

The polypeptide is UPF0758 protein PsycPRwf_0491 (Psychrobacter sp. (strain PRwf-1)).